Reading from the N-terminus, the 384-residue chain is Probable splicing factor YJU2B (384 aa).

The segment at 1–28 is disordered; sequence MGERKGTNKYYPPDFDPAKHGSLNGYRN. Residues 183–212 adopt a coiled-coil conformation; that stretch reads NSLLRSKFREEKKQIKEEEERDQALLTKAS. The segment at 275-331 is disordered; the sequence is GIRTKTPSVPGISPVSLGVVRRTSKEENKAEDKSVESPDGSRSRKAEGMCRKEETGC. Over residues 297–331 the composition is skewed to basic and acidic residues; the sequence is TSKEENKAEDKSVESPDGSRSRKAEGMCRKEETGC.

The protein belongs to the CWC16 family.

It is found in the nucleus. Functionally, may be involved in mRNA splicing. This chain is Probable splicing factor YJU2B (yju2b), found in Xenopus laevis (African clawed frog).